The following is a 237-amino-acid chain: MLDLTELEKSLGVKFENLSLLEQALIHTSWVNENPNHLSGSNERMEFLGDAVLGVIFADRLYHDFPDIQEGDLTRFRSLLVRRESLVRVALGINLGKYLYLGRGEDASKGRFKPANLAGAFEAVLAAIYLDKGIDATREVIFRLFKTEMERVQTLSSNIDYKSRLQELVQAQFQLTPRYRIIDFSGPEHNHLFIAEVYTEDKVLAEGSGRSKKEAETSAAKEALQQFENSFTAEDNI.

The RNase III domain occupies 4-133; that stretch reads LTELEKSLGV…VLAAIYLDKG (130 aa). Position 46 (Glu-46) interacts with Mg(2+). Catalysis depends on residues Asp-50 and Glu-122. Glu-122 contributes to the Mg(2+) binding site. Residues 160–229 form the DRBM domain; it reads DYKSRLQELV…AKEALQQFEN (70 aa).

This sequence belongs to the ribonuclease III family. In terms of assembly, homodimer. It depends on Mg(2+) as a cofactor.

Its subcellular location is the cytoplasm. The catalysed reaction is Endonucleolytic cleavage to 5'-phosphomonoester.. In terms of biological role, digests double-stranded RNA. Involved in the processing of primary rRNA transcript to yield the immediate precursors to the large and small rRNAs (23S and 16S). Processes some mRNAs, and tRNAs when they are encoded in the rRNA operon. Processes pre-crRNA and tracrRNA of type II CRISPR loci if present in the organism. The polypeptide is Ribonuclease 3 (Dehalococcoides mccartyi (strain ATCC BAA-2266 / KCTC 15142 / 195) (Dehalococcoides ethenogenes (strain 195))).